A 485-amino-acid chain; its full sequence is Glycogen synthase (485 aa).

Lys-20 lines the ADP-alpha-D-glucose pocket.

It belongs to the glycosyltransferase 1 family. Bacterial/plant glycogen synthase subfamily.

The catalysed reaction is [(1-&gt;4)-alpha-D-glucosyl](n) + ADP-alpha-D-glucose = [(1-&gt;4)-alpha-D-glucosyl](n+1) + ADP + H(+). It functions in the pathway glycan biosynthesis; glycogen biosynthesis. Synthesizes alpha-1,4-glucan chains using ADP-glucose. In Vibrio vulnificus (strain CMCP6), this protein is Glycogen synthase.